The primary structure comprises 607 residues: Zinc finger CCCH domain-containing protein 66 (607 aa).

ANK repeat units follow at residues 57-87 (EERT…DVNR) and 92-124 (DGAT…NPDS). The span at 161–178 (LNEVNGQEESEPEVEVEV) shows a compositional bias: acidic residues. A disordered region spans residues 161–193 (LNEVNGQEESEPEVEVEVEVSPPRGSERKEYPV). C3H1-type zinc fingers lie at residues 254–276 (PCPE…HGIF) and 284–308 (QYRT…HKPE). Residues 342–363 (ISPLPIGATTTPPLSPNGVSSP) are disordered. The span at 349–361 (ATTTPPLSPNGVS) shows a compositional bias: polar residues.

This Arabidopsis thaliana (Mouse-ear cress) protein is Zinc finger CCCH domain-containing protein 66.